We begin with the raw amino-acid sequence, 47 residues long: Protein YtiD (47 aa).

This chain is Protein YtiD (ytiD), found in Escherichia coli (strain K12).